A 407-amino-acid polypeptide reads, in one-letter code: DAZ-associated protein 1 (407 aa).

The residue at position 1 (M1) is an N-acetylmethionine. RRM domains lie at 10–97 (GKLF…RTRP) and 113–190 (NKIF…RAEP). Residues 74 to 117 (TLDGRNIDPKPCTPRGMQPERTRPKEGWQKGPRSDNSKSNKIFV) are disordered. Residues 91–111 (QPERTRPKEGWQKGPRSDNSK) are compositionally biased toward basic and acidic residues. K150 carries the post-translational modification N6-acetyllysine. The span at 185 to 194 (VKRAEPRDSK) shows a compositional bias: basic and acidic residues. Positions 185-407 (VKRAEPRDSK…NVQGFHPYRR (223 aa)) are disordered. Residues 195 to 207 (SQAPGQPGASQWG) show a composition bias toward polar residues. A compositionally biased stretch (pro residues) spans 247 to 262 (GPPPAGRGAPPPPPPF). R253 is subject to Omega-N-methylarginine. Positions 280 to 294 (FPQGYGAPPQFSFGY) are enriched in low complexity. Pro residues predominate over residues 295–315 (GPPPPPPDQFAPPGVPPPPAT). Over residues 364–379 (SDPSQQPPSYGGPSVP) the composition is skewed to low complexity. The span at 380–393 (GSGGPPAGGSGFGR) shows a compositional bias: gly residues.

Interacts with DAZ and DAZL. Post-translationally, acetylation at Lys-150 is predominantly observed in the nuclear fraction, and may regulate nucleocytoplasmic transport. Mainly expressed in testis. Expressed to a lower level in thymus. Weakly or not expressed in heart, liver, brain, placenta, lung, skeletal muscle, kidney and pancreas.

It is found in the cytoplasm. Its subcellular location is the nucleus. Its function is as follows. RNA-binding protein, which may be required during spermatogenesis. This chain is DAZ-associated protein 1 (DAZAP1), found in Homo sapiens (Human).